Consider the following 101-residue polypeptide: Putative pterin-4-alpha-carbinolamine dehydratase (101 aa).

This sequence belongs to the pterin-4-alpha-carbinolamine dehydratase family.

It carries out the reaction (4aS,6R)-4a-hydroxy-L-erythro-5,6,7,8-tetrahydrobiopterin = (6R)-L-erythro-6,7-dihydrobiopterin + H2O. In Rhizobium rhizogenes (strain K84 / ATCC BAA-868) (Agrobacterium radiobacter), this protein is Putative pterin-4-alpha-carbinolamine dehydratase.